A 630-amino-acid chain; its full sequence is MASSKFEEVRDKVKEFPTQSGVYLMKNTADKIIYIGKAKNLRNRVRSYFNDSKDHSPKTRLLVSNICEVEYILTKTEVEAFLLEASLIKKHRPKYNIRLRDDKAYPYIRFSWGDQAPRLYLARKVKKDGSLYFGPYTSGLAVHGTIKFLNRTFKIRDCTDAVFKSRTRPCMTYQIGRCTAPCVKYITMEDYRNEVEGAKLFLKGQNKKVIKSMTEKMMGAADEEKFEVAARLRDSIEAIKAILQKQAVINDTSEKDQDALGYYGDERGCLIETVHIRAGRVIGTRPHYLPHFDPNDAVEDPREWLVDFLNQYYEDNFIPDEVLLPLDIGNDLTKLMEEVLKERSGSKTTVRFATDERGRNLVDMAHENAKSHFLKYVSKSEEKLRGLEEIKERFNLPERPRRIECYDISTFQGAETVASQVVFEDGVPAKEHYRRYKIKTVQGINDFASMYEVLSRRFKHTEYDDPQLIVIDGGKGQLSQAMKILEEIGRKDIPVVGLAKARTESDFQKQEVESTEERFFLPGRSNPVIFKHNAEALYILSGIRDEAHRFAITYHRKLREGTSLESELDYVVGLGEKRKKVLLTQFNSIDEIKMADPEEIAKLKGFNRVLAERILLQLNESEEEETEVEE.

A GIY-YIG domain is found at 18 to 97; it reads TQSGVYLMKN…IKKHRPKYNI (80 aa). Positions 207-242 constitute a UVR domain; it reads KKVIKSMTEKMMGAADEEKFEVAARLRDSIEAIKAI.

This sequence belongs to the UvrC family. In terms of assembly, interacts with UvrB in an incision complex.

It is found in the cytoplasm. Functionally, the UvrABC repair system catalyzes the recognition and processing of DNA lesions. UvrC both incises the 5' and 3' sides of the lesion. The N-terminal half is responsible for the 3' incision and the C-terminal half is responsible for the 5' incision. The polypeptide is UvrABC system protein C (Bdellovibrio bacteriovorus (strain ATCC 15356 / DSM 50701 / NCIMB 9529 / HD100)).